The primary structure comprises 512 residues: 2-isopropylmalate synthase (512 aa).

A Pyruvate carboxyltransferase domain is found at 5–268 (LIIFDTTLRD…DVDIETQHIL (264 aa)). Positions 14, 202, 204, and 239 each coordinate Mn(2+). The tract at residues 394-512 (SFVSLSQHSE…SKADRVAAQG (119 aa)) is regulatory domain.

This sequence belongs to the alpha-IPM synthase/homocitrate synthase family. LeuA type 1 subfamily. As to quaternary structure, homodimer. Mn(2+) is required as a cofactor.

The protein localises to the cytoplasm. It catalyses the reaction 3-methyl-2-oxobutanoate + acetyl-CoA + H2O = (2S)-2-isopropylmalate + CoA + H(+). It participates in amino-acid biosynthesis; L-leucine biosynthesis; L-leucine from 3-methyl-2-oxobutanoate: step 1/4. Functionally, catalyzes the condensation of the acetyl group of acetyl-CoA with 3-methyl-2-oxobutanoate (2-ketoisovalerate) to form 3-carboxy-3-hydroxy-4-methylpentanoate (2-isopropylmalate). In Albidiferax ferrireducens (strain ATCC BAA-621 / DSM 15236 / T118) (Rhodoferax ferrireducens), this protein is 2-isopropylmalate synthase.